Here is a 243-residue protein sequence, read N- to C-terminus: Exosome complex component Rrp41 (243 aa).

This sequence belongs to the RNase PH family. Rrp41 subfamily. In terms of assembly, component of the archaeal exosome complex. Forms a hexameric ring-like arrangement composed of 3 Rrp41-Rrp42 heterodimers. The hexameric ring associates with a trimer of Rrp4 and/or Csl4 subunits.

The protein localises to the cytoplasm. In terms of biological role, catalytic component of the exosome, which is a complex involved in RNA degradation. Has 3'-&gt;5' exoribonuclease activity. Can also synthesize heteromeric RNA-tails. This Sulfolobus acidocaldarius (strain ATCC 33909 / DSM 639 / JCM 8929 / NBRC 15157 / NCIMB 11770) protein is Exosome complex component Rrp41.